We begin with the raw amino-acid sequence, 150 residues long: Large ribosomal subunit protein bL9 (150 aa).

The protein belongs to the bacterial ribosomal protein bL9 family.

Its function is as follows. Binds to the 23S rRNA. This is Large ribosomal subunit protein bL9 from Halorhodospira halophila (strain DSM 244 / SL1) (Ectothiorhodospira halophila (strain DSM 244 / SL1)).